The chain runs to 344 residues: Cell adhesion molecule CEACAM6 (344 aa).

An N-terminal signal peptide occupies residues 1 to 34; it reads MGPPSAPPCRLHVPWKEVLLTASLLTFWNPPTTA. An Ig-like V-type domain is found at 35 to 142; sequence KLTIESTPFN…EATGQFHVYP (108 aa). 12 N-linked (GlcNAc...) asparagine glycosylation sites follow: Asn104, Asn111, Asn115, Asn152, Asn173, Asn197, Asn224, Asn256, Asn274, Asn288, Asn292, and Asn309. 2 Ig-like C2-type domains span residues 145 to 232 and 240 to 314; these read PKPS…VTLN and PTIS…TTVT. Cys167 and Cys215 are disulfide-bonded. Cys259 and Cys299 are joined by a disulfide. Gly320 carries the GPI-anchor amidated glycine lipid modification. Residues 321-344 constitute a propeptide, removed in mature form; it reads SAPVLSAVATVGITIGVLARVALI.

This sequence belongs to the immunoglobulin superfamily. CEA family. In terms of assembly, homodimer; homodimerizes via its Ig-like V-type domain. Heterodimer with CEACAM8; heterodimerizes via its Ig-like V-type domain. Glycosylated. As to expression, expressed in neutrophils. Expressed in columnar epithelial and goblet cells of the colon. Expressed in numerous tumor cell lines (at protein level).

It is found in the cell membrane. The protein resides in the apical cell membrane. The protein localises to the cell surface. Functionally, cell surface glycoprotein that plays a role in cell adhesion and tumor progression. Intercellular adhesion occurs in a calcium- and fibronectin-independent manner. Mediates homophilic and heterophilic cell adhesion with other carcinoembryonic antigen-related cell adhesion molecules, such as CEACAM5 and CEACAM8. Heterophilic interaction with CEACAM8 occurs in activated neutrophils. Plays a role in neutrophil adhesion to cytokine-activated endothelial cells. Plays a role in cell migration and cell adhesion to endothelial cells. In Homo sapiens (Human), this protein is Cell adhesion molecule CEACAM6.